Reading from the N-terminus, the 485-residue chain is Glutamyl-tRNA(Gln) amidotransferase subunit A (485 aa).

Catalysis depends on charge relay system residues K79 and S154. Catalysis depends on S178, which acts as the Acyl-ester intermediate.

It belongs to the amidase family. GatA subfamily. As to quaternary structure, heterotrimer of A, B and C subunits.

The enzyme catalyses L-glutamyl-tRNA(Gln) + L-glutamine + ATP + H2O = L-glutaminyl-tRNA(Gln) + L-glutamate + ADP + phosphate + H(+). Allows the formation of correctly charged Gln-tRNA(Gln) through the transamidation of misacylated Glu-tRNA(Gln) in organisms which lack glutaminyl-tRNA synthetase. The reaction takes place in the presence of glutamine and ATP through an activated gamma-phospho-Glu-tRNA(Gln). The chain is Glutamyl-tRNA(Gln) amidotransferase subunit A from Clostridium botulinum (strain Loch Maree / Type A3).